Consider the following 129-residue polypeptide: Photosystem II reaction center Psb28 protein (129 aa).

The tract at residues 110-129 (GLGYSNNSGNNEGADEASEG) is disordered.

It belongs to the Psb28 family. In terms of assembly, part of the photosystem II complex.

It localises to the cellular thylakoid membrane. This Synechococcus sp. (strain WH7803) protein is Photosystem II reaction center Psb28 protein.